An 828-amino-acid polypeptide reads, in one-letter code: Transcription factor SOX-6 (828 aa).

The tract at residues 1–51 is disordered; the sequence is MSSKQATSPFACAADGEDAMTQDLTSREKEEGSDQHVASHLPLHPIMHNKP. Residues 25–34 show a composition bias toward basic and acidic residues; the sequence is TSREKEEGSD. Position 119 is a phosphothreonine (threonine 119). Residues 184–262 adopt a coiled-coil conformation; that stretch reads LAEKERQLST…LLQQQIQVQG (79 aa). Residues 380-470 are disordered; the sequence is SPGAKMPSTP…KSSIPSPIGG (91 aa). The span at 393–402 shows a compositional bias: polar residues; it reads NTAGTVSPTG. Serine 399 is modified (phosphoserine). Threonine 401 is subject to Phosphothreonine. Glycyl lysine isopeptide (Lys-Gly) (interchain with G-Cter in SUMO) cross-links involve residues lysine 404 and lysine 417. Phosphoserine is present on residues serine 439 and serine 442. Polar residues predominate over residues 439 to 461; sequence SPTSPTQNLFPASKTSPVNLPNK. Residues 621–689 constitute a DNA-binding region (HMG box); the sequence is IKRPMNAFMV…IHLEKYPNYK (69 aa). Polar residues predominate over residues 753–781; sequence TPSPQMTSDCSSTSASPEPSLPVIQSTYG. Residues 753 to 828 form a disordered region; the sequence is TPSPQMTSDC…NEAPEAVSAN (76 aa). Over residues 796–809 the composition is skewed to acidic residues; sequence NGEDEMEMYDDYED.

As to quaternary structure, homodimer. Interacts with DAZAP2. May interact with CENPK. Post-translationally, sumoylation inhibits the transcriptional activity. As to expression, expressed in a wide variety of tissues, most abundantly in skeletal musclen.

The protein localises to the nucleus. It is found in the cytoplasm. In terms of biological role, transcription factor that plays a key role in several developmental processes, including neurogenesis, chondrocytes differentiation and cartilage formation. Specifically binds the 5'-AACAAT-3' DNA motif present in enhancers and super-enhancers and promotes expression of genes important for chondrogenesis. Required for overt chondrogenesis when condensed prechondrocytes differentiate into early stage chondrocytes: SOX5 and SOX6 cooperatively bind with SOX9 on active enhancers and super-enhancers associated with cartilage-specific genes, and thereby potentiate SOX9's ability to transactivate. Not involved in precartilaginous condensation, the first step in chondrogenesis, during which skeletal progenitors differentiate into prechondrocytes. Together with SOX5, required to form and maintain a pool of highly proliferating chondroblasts between epiphyses and metaphyses, to form columnar chondroblasts, delay chondrocyte prehypertrophy but promote hypertrophy, and to delay terminal differentiation of chondrocytes on contact with ossification fronts. Binds to the proximal promoter region of the myelin protein MPZ gene, and is thereby involved in the differentiation of oligodendroglia in the developing spinal tube. Binds to the gene promoter of MBP and acts as a transcriptional repressor. In Homo sapiens (Human), this protein is Transcription factor SOX-6.